The primary structure comprises 347 residues: Protein RecA (347 aa).

66 to 73 (GPESSGKT) provides a ligand contact to ATP.

It belongs to the RecA family.

It localises to the cytoplasm. Can catalyze the hydrolysis of ATP in the presence of single-stranded DNA, the ATP-dependent uptake of single-stranded DNA by duplex DNA, and the ATP-dependent hybridization of homologous single-stranded DNAs. It interacts with LexA causing its activation and leading to its autocatalytic cleavage. This chain is Protein RecA, found in Burkholderia cepacia (Pseudomonas cepacia).